The primary structure comprises 340 residues: Fructose import permease protein FruG (340 aa).

9 helical membrane-spanning segments follow: residues 23–43, 49–69, 73–93, 101–121, 130–150, 182–202, 234–254, 273–293, and 307–327; these read IPTLAAVVIFILMIIMGQALF, LGFISSLFIDHAYLIILAVAM, ILTGGIDLSVGAIVAITAVVG, VPAFLVMIIMLLIGAVFGLLA, MQPFIATLSTMFLARGLASII, LSFNVGVIIALVVVVFGYVFL, IIYLTSATLAALASIVYTANI, VVIGGTIITGGFGYVLGSVLG, and FGVPAEWTTIVIGLMILVFVV.

The protein belongs to the binding-protein-dependent transport system permease family. The complex is composed of an ATP-binding protein (FruK), two transmembrane proteins (FruF and FruG) and a solute-binding protein (FruE).

The protein resides in the cell membrane. Its function is as follows. Part of the high-affinity ABC transporter complex FruEKFG involved in fructose uptake. Can also transport ribose and xylose, with lower affinity. Probably responsible for the translocation of the substrate across the membrane. The chain is Fructose import permease protein FruG from Bifidobacterium longum (strain NCC 2705).